A 352-amino-acid polypeptide reads, in one-letter code: Aromatic amino acid aminotransferase (352 aa).

N6-(pyridoxal phosphate)lysine is present on Lys-217.

The protein belongs to the class-II pyridoxal-phosphate-dependent aminotransferase family. In terms of assembly, homodimer. Pyridoxal 5'-phosphate is required as a cofactor.

It carries out the reaction an aromatic L-alpha-amino acid + 2-oxoglutarate = an aromatic oxo-acid + L-glutamate. Its function is as follows. Aminotransferase that catalyzes the conversion of aromatic amino acids and 2-oxoglutarate into corresponding aromatic oxo acids and L-glutamate. In Cutibacterium acnes (strain DSM 16379 / KPA171202) (Propionibacterium acnes), this protein is Aromatic amino acid aminotransferase.